The primary structure comprises 439 residues: Magnesium-dependent glutamate N-prenyltransferase (439 aa).

Asparagine 322, threonine 326, glutamate 330, and phenylalanine 337 together coordinate Mg(2+).

It belongs to the terpene synthase family. Requires Mg(2+) as cofactor.

It catalyses the reaction dimethylallyl diphosphate + L-glutamate = prekainate + diphosphate. It functions in the pathway secondary metabolite biosynthesis. Functionally, magnesium-dependent glutamate N-prenyltransferase: part of the gene cluster that mediates the biosynthesis of kainic acid (KA) and derivatives, natural products with neurochemical activity acting as ionotropic glutamate receptor (iGluR) agonists, thus being neurotoxins. Catalyzes the conversion of L-glutamic acid (L-Glu) to prekainic acid in the presence of dimethylallyl diphosphate (DMAPP). Can also use geranyl diphosphate (GPP) as substrate, thus leading to the formation of N-geranyl-L-glutamic acid (L-NGG). The sequence is that of Magnesium-dependent glutamate N-prenyltransferase from Digenea simplex (Marine red alga).